Consider the following 148-residue polypeptide: Large ribosomal subunit protein bL9 (148 aa).

This sequence belongs to the bacterial ribosomal protein bL9 family.

Its function is as follows. Binds to the 23S rRNA. The protein is Large ribosomal subunit protein bL9 of Pseudomonas fluorescens (strain ATCC BAA-477 / NRRL B-23932 / Pf-5).